Reading from the N-terminus, the 183-residue chain is Small ribosomal subunit protein uS4c (183 aa).

Positions 82 to 143 (MRLDNILFRL…KQRSKALIQN (62 aa)) constitute an S4 RNA-binding domain.

The protein belongs to the universal ribosomal protein uS4 family. In terms of assembly, part of the 30S ribosomal subunit. Contacts protein S5. The interaction surface between S4 and S5 is involved in control of translational fidelity.

It is found in the plastid. It localises to the chloroplast. In terms of biological role, one of the primary rRNA binding proteins, it binds directly to 16S rRNA where it nucleates assembly of the body of the 30S subunit. Its function is as follows. With S5 and S12 plays an important role in translational accuracy. The protein is Small ribosomal subunit protein uS4c (rps4) of Babiana stricta (Baboon flower).